The following is a 131-amino-acid chain: Fatty acid-binding protein (131 aa).

(5Z,8Z,11Z,14Z)-eicosatetraenoate is bound by residues Arg106 and 126 to 128 (RPY). Residues Arg106 and 126–128 (RPY) each bind (9Z)-octadecenoate.

Belongs to the calycin superfamily. Fatty-acid binding protein (FABP) family.

Its subcellular location is the cytoplasm. FABPs are thought to play a role in the intracellular transport of long-chain fatty acids and their acyl-CoA esters. The protein is Fatty acid-binding protein of Lepidoglyphus destructor (Storage mite).